The sequence spans 138 residues: Acidic phospholipase A2 Cvv-E6h (138 aa).

Positions 1–16 (MRTLWIVAVLLLGVEG) are cleaved as a signal peptide. Disulfide bonds link Cys42–Cys131, Cys44–Cys60, Cys59–Cys111, Cys65–Cys138, Cys66–Cys104, Cys73–Cys97, and Cys91–Cys102. Residues Tyr43, Gly45, and Gly47 each coordinate Ca(2+). Residue His63 is part of the active site. Position 64 (Asp64) interacts with Ca(2+). Asp105 is an active-site residue.

The protein belongs to the phospholipase A2 family. Group II subfamily. D49 sub-subfamily. Ca(2+) is required as a cofactor. Expressed by the venom gland.

It is found in the secreted. It catalyses the reaction a 1,2-diacyl-sn-glycero-3-phosphocholine + H2O = a 1-acyl-sn-glycero-3-phosphocholine + a fatty acid + H(+). Snake venom phospholipase A2 (PLA2) that shows very low inhibition of ADP-induced platelet aggregation in platelet-rich plasma of human, rabbit and guinea pig. In vivo, shows efficient edema-inducing activities in rat paws. PLA2 catalyzes the calcium-dependent hydrolysis of the 2-acyl groups in 3-sn-phosphoglycerides. In Crotalus viridis viridis (Prairie rattlesnake), this protein is Acidic phospholipase A2 Cvv-E6h.